Reading from the N-terminus, the 807-residue chain is Protein WEAK CHLOROPLAST MOVEMENT UNDER BLUE LIGHT 1 (807 aa).

Positions 1–162 (MEDLKTVEAS…GTPKNVDSHR (162 aa)) are disordered. Residues 31–40 (RESNIQSATK) are compositionally biased toward polar residues. Residues 46–73 (QSQTDTEETQQSQTDTEETQQSQTDDTT) show a composition bias toward low complexity. Residues 138-157 (RTVSSPRFSGSPVSTGTPKN) are compositionally biased toward polar residues. A Phosphoserine modification is found at Ser148. Coiled coils occupy residues 191-429 (RMQA…ELVA), 457-489 (DLHA…LKLA), 516-621 (IAVA…ALEE), and 664-724 (AAVS…WRAE). 2 disordered regions span residues 532–565 (IASV…EAKS) and 722–789 (RAEH…KKKK). Composition is skewed to basic and acidic residues over residues 537–548 (SKEKDAREKMVE), 722–732 (RAEHEQKRKAG), and 739–749 (KNLKESFEGGK). Residues 761 to 781 (SSPSESYGTEENSETNLSPQT) are compositionally biased toward polar residues.

This sequence belongs to the WEB family. As to quaternary structure, interacts with PMI2. As to expression, ubiquitous but preferentially in chloroplast-containing tissues.

The protein localises to the cytoplasm. Its function is as follows. Required for the chloroplast avoidance response under high intensity blue light. This avoidance response consists in the relocation of chloroplasts on the anticlinal side of exposed cells. Acts in association with PMI2 to maintain the velocity of chloroplast photorelocation movement via cp-actin filaments regulation. The polypeptide is Protein WEAK CHLOROPLAST MOVEMENT UNDER BLUE LIGHT 1 (WEB1) (Arabidopsis thaliana (Mouse-ear cress)).